The chain runs to 2259 residues: Putative Polycomb group protein ASXL3 (2259 aa).

An HTH HARE-type domain is found at R10–E83. Positions V181 to K230 are disordered. Residues K202 to H215 show a composition bias toward basic and acidic residues. Polar residues predominate over residues K218–Q227. The region spanning P253–G362 is the DEUBAD domain. Disordered regions lie at residues S364–A399, C607–A643, E703–P810, S857–I1012, S1025–A1049, R1126–E1150, L1433–V1462, D1614–A1643, D1687–P1719, and N1993–R2075. Polar residues-rich tracts occupy residues C607–S617, G630–A643, and E703–S717. The span at L722–P741 shows a compositional bias: low complexity. Polar residues-rich tracts occupy residues K770–P781 and Q926–S945. Basic and acidic residues-rich tracts occupy residues D949–S985 and P995–R1006. The segment covering R1034 to S1043 has biased composition (low complexity). Residues N1437 to T1448 show a composition bias toward polar residues. Residues E1699–P1719 show a composition bias toward polar residues. A compositionally biased stretch (pro residues) spans P2023–P2055. A PHD-type; atypical zinc finger spans residues E2221–V2258.

Belongs to the Asx family. In terms of assembly, core component of the polycomb repressive deubiquitinase (PR-DUB) complex, at least composed of BAP1, one of ASXL1, ASXL2 or (probably) ASXL3, and one of MBD5 or MBD6. Distinct combinations of ASXL and MBD proteins may preferentially bind specific histone modification marks. The PR-DUB core associates with a number of accessory proteins, including FOXK1, FOXK2, KDM1B, HCFC1 and OGT; KDM1B specifically associates with ASXL2 PR-DUB complexes. Interacts (via PHD domain) with MBD5 and MBD6 (via MBD domain); the interaction is probably direct and mediates association of MBD proteins with the PR-DUB core.

Its subcellular location is the nucleus. Putative Polycomb group (PcG) protein. PcG proteins act by forming multiprotein complexes, which are required to maintain the transcriptionally repressive state of homeotic genes throughout development. PcG proteins are not required to initiate repression, but to maintain it during later stages of development. They probably act via methylation of histones, rendering chromatin heritably changed in its expressibility. Non-catalytic component of the PR-DUB complex, a complex that specifically mediates deubiquitination of histone H2A monoubiquitinated at 'Lys-119' (H2AK119ub1). The PR-DUB complex is an epigenetic regulator of gene expression and acts as a transcriptional coactivator, affecting genes involved in development, cell communication, signaling, cell proliferation and cell viability. ASXL1, ASXL2 and ASXL3 function redundantly in the PR-DUB complex and are essential for chromatin recruitment and transcriptional activation of associated genes. In Mus musculus (Mouse), this protein is Putative Polycomb group protein ASXL3 (Asxl3).